A 471-amino-acid polypeptide reads, in one-letter code: Glutamate--tRNA ligase (471 aa).

Residues 9 to 19 carry the 'HIGH' region motif; sequence PSPTGYLHVGG. Residues Cys98, Cys100, Cys125, and His127 each contribute to the Zn(2+) site. The 'KMSKS' region signature appears at 237–241; the sequence is KLSKR. ATP is bound at residue Lys240.

The protein belongs to the class-I aminoacyl-tRNA synthetase family. Glutamate--tRNA ligase type 1 subfamily. Monomer. Requires Zn(2+) as cofactor.

It is found in the cytoplasm. The enzyme catalyses tRNA(Glu) + L-glutamate + ATP = L-glutamyl-tRNA(Glu) + AMP + diphosphate. Its function is as follows. Catalyzes the attachment of glutamate to tRNA(Glu) in a two-step reaction: glutamate is first activated by ATP to form Glu-AMP and then transferred to the acceptor end of tRNA(Glu). This Shigella boydii serotype 4 (strain Sb227) protein is Glutamate--tRNA ligase.